We begin with the raw amino-acid sequence, 838 residues long: G-protein coupled receptor-associated sorting protein 2 (838 aa).

4 disordered regions span residues 1–122 (MTGA…GARP), 218–292 (ASNE…SNPF), 349–368 (RFRHRDKEDPNTALKLRAQK), and 531–552 (LELSPEGEEQESLLQPDQPSPE). Positions 13-31 (KPEKKAGEEVIAGPEREND) are enriched in basic and acidic residues. A compositionally biased stretch (polar residues) spans 220–245 (NESGFWSADETSTASSFWTGEETSVR). Residues 255 to 271 (RSRHRAKHQTNPRSRPR) are compositionally biased toward basic residues. Phosphoserine is present on residues S282 and S284. The segment covering 542–552 (SLLQPDQPSPE) has biased composition (polar residues).

It belongs to the GPRASP family. Interacts with cytoplasmic tails of a variety of G-protein coupled receptors such as muscarinic acetylcholine receptor M1/CHRM1 and calcitonin receptor/CALCR. As to expression, expressed in the brain.

Functionally, may play a role in regulation of a variety of G-protein coupled receptors. This chain is G-protein coupled receptor-associated sorting protein 2 (GPRASP2), found in Homo sapiens (Human).